The sequence spans 433 residues: MSAKKLFIQTLGCAMNVRDSEHMIAELTQKENYALTEDIKEADLILINTCSVREKPVHKLFSEVGGFEKVKKEGAKIGVCGCTASHLGNEIFKRAPYVDFVLGARNISKITQAIKTPKFMGIDIDYDESEFAFADFRNSIYKSYINISIGCDKHCTYCIVPHTRGDEISIPFNIIHKEAQKAVEKGAKEIFLLGQNVNNYGKRFRNEHKKMDFSDLLEELSTIEDLERIRFTSPHPLHMDDKFLEVFANNPKVCKSMHMPLQSGSSEILKAMKRGYTKKWYLNRALKLRELCPNVSISTDIIVAFPGESEKDFEETMDVLEKVRFEQIFSFKYSKRPLTKAATMSNQIDEETASRRLSTLQNRHSEILDEIVKKQENKTFKVLFEELRVGNSIAGRTDNNFLVQVEGSEELLGQFKEVKITNAKRMVLYGEII.

The MTTase N-terminal domain occupies 4–119; that stretch reads KKLFIQTLGC…ITQAIKTPKF (116 aa). Cys13, Cys50, Cys82, Cys151, Cys155, and Cys158 together coordinate [4Fe-4S] cluster. The Radical SAM core domain occupies 137–370; that stretch reads RNSIYKSYIN…QNRHSEILDE (234 aa). The region spanning 373 to 433 is the TRAM domain; it reads KKQENKTFKV…KRMVLYGEII (61 aa).

It belongs to the methylthiotransferase family. MiaB subfamily. In terms of assembly, monomer. The cofactor is [4Fe-4S] cluster.

It is found in the cytoplasm. It catalyses the reaction N(6)-dimethylallyladenosine(37) in tRNA + (sulfur carrier)-SH + AH2 + 2 S-adenosyl-L-methionine = 2-methylsulfanyl-N(6)-dimethylallyladenosine(37) in tRNA + (sulfur carrier)-H + 5'-deoxyadenosine + L-methionine + A + S-adenosyl-L-homocysteine + 2 H(+). In terms of biological role, catalyzes the methylthiolation of N6-(dimethylallyl)adenosine (i(6)A), leading to the formation of 2-methylthio-N6-(dimethylallyl)adenosine (ms(2)i(6)A) at position 37 in tRNAs that read codons beginning with uridine. The chain is tRNA-2-methylthio-N(6)-dimethylallyladenosine synthase from Campylobacter jejuni subsp. doylei (strain ATCC BAA-1458 / RM4099 / 269.97).